Reading from the N-terminus, the 674-residue chain is MKISELGYDRAFLQLFDGNDFQLYDHQRMAIEQIRKGRNVVVSVPTAAGKTLIAYSAIYETFQRNLKSIYIVPLRSLAMEKFSELSRLRDLGLKVKMSIGDYDDSPDFIKRYDAVILTSEKADSLLHHDPYILNDVGLLVLDEIHTIGDESRGPTLETVASIARYVNPDVRILALSATVSNAMELASWLDASLIKSDFRPVPLKTGILYRDQLYLDGKRRSGVSINQIIRETVEDNGQVLMFVSSRKKAEDTARDLAQIFGSDANIKISSDETNVYDDMLNEILPRGVAFHHAGLSNDQRAFIEREFRARRIKVIVATPTLAAGVNLPARLVIVRDITRWGSDGISYLTNMEIKQMIGRAGRPGYDQYGIGLIYVSSQSSYEAAKDYLSTDPEPVVSYLGNEAKVRFNTLAAISMGLARSPSDIMKFYETTLFFSQNGKDLLEEKISASLKFLEKNGFIKQSPDLRTTQLGKVTSDLYIDPESALRLVDFFDGPADVDHAIYYISLCREIVPFNIKDDYSAMEFLDDIGLIDGDIDAAKTAIVLRDWISEASYKYLYDKYGIAPGDMQARISMADWLSYSLAKLSSIYKPEVRRMLEILNLRIKEGIREDILQLVLIPGVGRVRARRLYDAGLRSIEDVASASPDRIKAIYGFSDTLANAIIRRARTIASKEVR.

Residues Q27 and 44–51 contribute to the ATP site; that span reads VPTAAGKT. In terms of domain architecture, Helicase ATP-binding spans 31–197; sequence IEQIRKGRNV…WLDASLIKSD (167 aa). Residues 142–145 carry the DEAH box motif; sequence DEIH. Residues 224–411 enclose the Helicase C-terminal domain; sequence SINQIIRETV…EAKVRFNTLA (188 aa).

The protein belongs to the helicase family. Hel308 subfamily. As to quaternary structure, monomer.

The catalysed reaction is Couples ATP hydrolysis with the unwinding of duplex DNA by translocating in the 3'-5' direction.. It catalyses the reaction ATP + H2O = ADP + phosphate + H(+). In terms of biological role, DNA-dependent ATPase and 3'-5' DNA helicase that may be involved in repair of stalled replication forks. The polypeptide is ATP-dependent DNA helicase Hel308 (Thermoplasma acidophilum (strain ATCC 25905 / DSM 1728 / JCM 9062 / NBRC 15155 / AMRC-C165)).